A 234-amino-acid polypeptide reads, in one-letter code: Redox-sensing transcriptional repressor Rex (234 aa).

A DNA-binding region (H-T-H motif) is located at residues 17–56 (TYIRVLEELEAQNVLRASSGELARRAGVTPFQVRKDLTYF). 91 to 96 (GMGRLG) is an NAD(+) binding site.

Belongs to the transcriptional regulatory Rex family. As to quaternary structure, homodimer.

The protein resides in the cytoplasm. Functionally, modulates transcription in response to changes in cellular NADH/NAD(+) redox state. The polypeptide is Redox-sensing transcriptional repressor Rex (Deinococcus radiodurans (strain ATCC 13939 / DSM 20539 / JCM 16871 / CCUG 27074 / LMG 4051 / NBRC 15346 / NCIMB 9279 / VKM B-1422 / R1)).